The primary structure comprises 337 residues: Alcohol dehydrogenase 1 (337 aa).

Zn(2+) is bound by residues C37, H58, C89, C92, C95, C103, and C145.

It belongs to the zinc-containing alcohol dehydrogenase family. In terms of assembly, multimeric (with different ratios of monomers). It depends on Zn(2+) as a cofactor.

It carries out the reaction a primary alcohol + NAD(+) = an aldehyde + NADH + H(+). The enzyme catalyses a secondary alcohol + NAD(+) = a ketone + NADH + H(+). It participates in alcohol metabolism; ethanol biosynthesis via fermentation pathway. Its activity is regulated as follows. Inhibited by ethanol. The sequence is that of Alcohol dehydrogenase 1 (adhA) from Zymomonas mobilis subsp. mobilis (strain ATCC 31821 / ZM4 / CP4).